Consider the following 494-residue polypeptide: UPF0371 protein M28_Spy1076 (494 aa).

Belongs to the UPF0371 family.

In Streptococcus pyogenes serotype M28 (strain MGAS6180), this protein is UPF0371 protein M28_Spy1076.